A 316-amino-acid chain; its full sequence is Pantothenate kinase (316 aa).

Residue 95 to 102 (GSVAVGKS) participates in ATP binding.

This sequence belongs to the prokaryotic pantothenate kinase family.

The protein resides in the cytoplasm. It carries out the reaction (R)-pantothenate + ATP = (R)-4'-phosphopantothenate + ADP + H(+). It functions in the pathway cofactor biosynthesis; coenzyme A biosynthesis; CoA from (R)-pantothenate: step 1/5. The polypeptide is Pantothenate kinase (Shewanella putrefaciens (strain CN-32 / ATCC BAA-453)).